The chain runs to 603 residues: Geraniol synthase, chloroplastic (603 aa).

The transit peptide at 1-35 (MSSISQKVVIGLNKAAANNNLQNLDRRGFKTRCVS) directs the protein to the chloroplast. (2E)-geranyl diphosphate is bound by residues R319, D356, D360, R497, and D500. Residues D356 and D360 each coordinate Mg(2+). The DDXXD motif signature appears at 356 to 360 (DDVYD). The Mg(2+) site is built by D500, T504, and E508.

This sequence belongs to the terpene synthase family. Tpsb subfamily. Monomer. Mg(2+) serves as cofactor. It depends on Mn(2+) as a cofactor.

The protein localises to the plastid. Its subcellular location is the chloroplast. It catalyses the reaction (2E)-geranyl diphosphate + H2O = (2E)-geraniol + diphosphate. The protein operates within secondary metabolite biosynthesis; terpenoid biosynthesis. Its function is as follows. Monoterpene synthase (mono-TPS) involved in the biosynthesis of monoterpenes natural products. Catalyzes the conversion of (2E)-geranyl diphosphate (GPP) into geraniol. This Perilla frutescens var. hirtella (Perilla citriodora) protein is Geraniol synthase, chloroplastic.